The primary structure comprises 1110 residues: Isoleucine--tRNA ligase (1110 aa).

Residues 47–57 carry the 'HIGH' region motif; the sequence is PSANGTPGIHH. The short motif at 658-662 is the 'KMSKS' region element; sequence KMSKR. An ATP-binding site is contributed by K661.

This sequence belongs to the class-I aminoacyl-tRNA synthetase family. IleS type 2 subfamily. Monomer. The cofactor is Zn(2+).

It localises to the cytoplasm. It carries out the reaction tRNA(Ile) + L-isoleucine + ATP = L-isoleucyl-tRNA(Ile) + AMP + diphosphate. In terms of biological role, catalyzes the attachment of isoleucine to tRNA(Ile). As IleRS can inadvertently accommodate and process structurally similar amino acids such as valine, to avoid such errors it has two additional distinct tRNA(Ile)-dependent editing activities. One activity is designated as 'pretransfer' editing and involves the hydrolysis of activated Val-AMP. The other activity is designated 'posttransfer' editing and involves deacylation of mischarged Val-tRNA(Ile). This is Isoleucine--tRNA ligase from Cytophaga hutchinsonii (strain ATCC 33406 / DSM 1761 / CIP 103989 / NBRC 15051 / NCIMB 9469 / D465).